A 409-amino-acid polypeptide reads, in one-letter code: uncharacterized protein (409 aa).

One can recognise an OBG-type G domain in the interval 5–274; it reads ILIGFVGKPS…LAKQGFVKYE (270 aa). GTP-binding positions include 11–18 and 83–87; these read GKPSSGKS and DVAGL.

The protein belongs to the TRAFAC class OBG-HflX-like GTPase superfamily. OBG GTPase family.

It is found in the cytoplasm. The protein localises to the nucleus. This is an uncharacterized protein from Schizosaccharomyces pombe (strain 972 / ATCC 24843) (Fission yeast).